Here is a 287-residue protein sequence, read N- to C-terminus: ATP synthase gamma chain (287 aa).

This sequence belongs to the ATPase gamma chain family. As to quaternary structure, F-type ATPases have 2 components, CF(1) - the catalytic core - and CF(0) - the membrane proton channel. CF(1) has five subunits: alpha(3), beta(3), gamma(1), delta(1), epsilon(1). CF(0) has three main subunits: a, b and c.

The protein resides in the cell inner membrane. Produces ATP from ADP in the presence of a proton gradient across the membrane. The gamma chain is believed to be important in regulating ATPase activity and the flow of protons through the CF(0) complex. This chain is ATP synthase gamma chain, found in Photorhabdus laumondii subsp. laumondii (strain DSM 15139 / CIP 105565 / TT01) (Photorhabdus luminescens subsp. laumondii).